We begin with the raw amino-acid sequence, 622 residues long: Dehydrogenase mpl7 (622 aa).

FAD contacts are provided by residues 23 to 24, 44 to 45, and 102 to 105; these read TA, EA, and NFMS. The Proton acceptor role is filled by histidine 554. FAD is bound by residues alanine 582 and 593–594; that span reads IM.

The protein belongs to the GMC oxidoreductase family. Homodimer. FAD serves as cofactor.

The protein operates within mycotoxin biosynthesis. Dehydrogenase; part of the gene cluster that mediates the biosynthesis of the mycotoxin citrinin, a hepato-nephrotoxic compound to humans due to inhibition of respiration complex III. The pathway begins with the synthesis of a keto-aldehyde intermediate by the citrinin PKS (pksCT) from successive condensations of 4 malonyl-CoA units, presumably with a simple acetyl-CoA starter unit. Release of the keto-aldehyde intermediate is consistent with the presence of the C-terminal reductive release domain. Mp11 collaborates with pksCT by catalyzing the hydrolysis of ACP-bound acyl intermediates to free the ACP from stalled intermediates. Mpl2 then catalyzes the oxidation of the C-12 methyl of the ketone intermediate to an alcohol intermediate which is further oxidized by the oxidoreductase mpl7 to produce a bisaldehyde intermediate. The fourth catalytic step is catalyzed by the mpl4 aldehyde dehydrogenase. The final transformation is the reduction of C-3 by mpl6 to provide the chemically stable citrinin nucleus. The polypeptide is Dehydrogenase mpl7 (Monascus purpureus (Red mold)).